The sequence spans 79 residues: Small integral membrane protein 40 (79 aa).

A helical transmembrane segment spans residues 35 to 55 (FFIFLALFLTLLMLEAAYKLL).

The protein localises to the membrane. The chain is Small integral membrane protein 40 from Homo sapiens (Human).